A 716-amino-acid polypeptide reads, in one-letter code: Ubiquitin thioesterase zranb1-B (716 aa).

2 consecutive RanBP2-type zinc fingers follow at residues 3-33 (DLGL…QRHN) and 82-111 (TSSK…QRQQ). 8 residues coordinate Zn(2+): cysteine 10, cysteine 13, cysteine 24, cysteine 27, cysteine 88, cysteine 91, cysteine 102, and cysteine 105. Residues 113–143 (SQQHSPLSPSETPQTSGSRPSPVTSDPCEEY) are disordered. A compositionally biased stretch (polar residues) spans 118 to 136 (PLSPSETPQTSGSRPSPVT). The RanBP2-type 3 zinc-finger motif lies at 152-181 (HAQRWPCSACTYENWPKSLRCVVCDHPKPS). Cysteine 158, cysteine 161, cysteine 172, and cysteine 175 together coordinate Zn(2+). The interval 178–228 (PKPSGSPETPQQDSEAESATSPSIVNEQERENVRTAGGGGGGSRGRLRKLS) is disordered. Polar residues predominate over residues 183-203 (SPETPQQDSEAESATSPSIVN). 2 ANK repeats span residues 268 to 298 (RRSD…SGGD) and 321 to 348 (FTLV…QQTA). The region spanning 440 to 600 (LYALWNRTAG…RGHFSALVAM (161 aa)) is the OTU domain. Residue cysteine 451 is the Nucleophile of the active site. The active-site Proton acceptor is the histidine 593.

This sequence belongs to the peptidase C64 family.

The protein localises to the cytoplasm. It is found in the nucleus. The catalysed reaction is Thiol-dependent hydrolysis of ester, thioester, amide, peptide and isopeptide bonds formed by the C-terminal Gly of ubiquitin (a 76-residue protein attached to proteins as an intracellular targeting signal).. Its function is as follows. Ubiquitin thioesterase, which specifically hydrolyzes 'Lys-29'-linked and 'Lys-33'-linked diubiquitin. Also cleaves 'Lys-63'-linked chains, but with 40-fold less efficiency compared to 'Lys-29'-linked ones. Positive regulator of the Wnt signaling pathway that deubiquitinates apc protein, a negative regulator of Wnt-mediated transcription. Acts as a regulator of autophagy by mediating deubiquitination of pik3c3/vps34, thereby promoting autophagosome maturation. Plays a role in the regulation of cell morphology and cytoskeletal organization. Required in the stress fiber dynamics and cell migration. The polypeptide is Ubiquitin thioesterase zranb1-B (zranb1b) (Danio rerio (Zebrafish)).